The chain runs to 141 residues: Large ribosomal subunit protein uL16 (141 aa).

The protein belongs to the universal ribosomal protein uL16 family. In terms of assembly, part of the 50S ribosomal subunit.

Binds 23S rRNA and is also seen to make contacts with the A and possibly P site tRNAs. This is Large ribosomal subunit protein uL16 from Campylobacter jejuni subsp. jejuni serotype O:6 (strain 81116 / NCTC 11828).